A 65-amino-acid polypeptide reads, in one-letter code: Stress-associated endoplasmic reticulum protein 2 (65 aa).

The chain crosses the membrane as a helical span at residues 38–58; sequence GPWLLALFVFVVCGSAIFQII.

It belongs to the RAMP4 family. As to quaternary structure, interacts with SEC61B, SEC61A1 and the SEC61 complex. Interacts with CANX.

The protein resides in the membrane. It is found in the endoplasmic reticulum membrane. In terms of biological role, interacts with target proteins during their translocation into the lumen of the endoplasmic reticulum. Protects unfolded target proteins against degradation during ER stress. May facilitate glycosylation of target proteins after termination of ER stress. May modulate the use of N-glycosylation sites on target proteins. This Bos taurus (Bovine) protein is Stress-associated endoplasmic reticulum protein 2 (SERP2).